Reading from the N-terminus, the 726-residue chain is Sensory/regulatory protein RpfC (726 aa).

At 1 to 22 the chain is on the periplasmic side; the sequence is MKSPLPWLKRRLSGRADSEHAQ. The segment at 1–22 is sensor; that stretch reads MKSPLPWLKRRLSGRADSEHAQ. Residues 23–40 form a helical membrane-spanning segment; that stretch reads NLIRIIITTLFISYLGWR. The Cytoplasmic portion of the chain corresponds to 41 to 51; sequence YQHTHGDTLMA. A helical transmembrane segment spans residues 52–72; that stretch reads TWLILVGELLVSLGLMVAILL. At 73–94 the chain is on the periplasmic side; the sequence is RPQVSHTRRLIGMLLDYTCTGA. Residues 95 to 115 traverse the membrane as a helical segment; it reads IMAIQGEPASPLYAVCMWVTI. Over 116 to 127 the chain is Cytoplasmic; it reads GNGLRYGSNYLR. Residues 128 to 148 traverse the membrane as a helical segment; sequence AATAMGSLCFLGAILISPYWK. The Periplasmic segment spans residues 149 to 151; that stretch reads ANP. A helical transmembrane segment spans residues 152–172; sequence YLSWGLLLGLIAVPLYFDSLL. Residues 173–726 are Cytoplasmic-facing; the sequence is RAMTRAVREA…DGECSPRSNE (554 aa). The Histidine kinase domain maps to 195 to 417; the sequence is NMSHEFRTPL…VFWFELPMAI (223 aa). Histidine 198 carries the phosphohistidine; by autocatalysis modification. The region spanning 463 to 581 is the Response regulatory domain; it reads RMLVADDHEA…KLLDTLADLA (119 aa). The residue at position 512 (aspartate 512) is a 4-aspartylphosphate. Residues 618–711 form the HPt domain; it reads GEEFERQFVR…KAGKDALDAR (94 aa). Histidine 657 bears the Phosphohistidine mark.

As to quaternary structure, at low DSF concentrations, interacts with RpfF. In terms of processing, autophosphorylated. Activation may require a sequential transfer of a phosphate group from a His in the primary transmitter domain, to an Asp in the receiver domain and to a His in the secondary transmitter domain.

It localises to the cell inner membrane. The enzyme catalyses ATP + protein L-histidine = ADP + protein N-phospho-L-histidine.. With respect to regulation, binding of DSF to the sensor region causes allosteric change, which facilitates RpfC autophosphorylation. Functionally, hybrid sensor kinase that regulates diverse biological functions through two distinct molecular mechanisms. At low cell density, the extracellular concentration of the diffusible signaling factor (DSF) is below a threshold, and unphosphorylated RpfC is involved in the negative regulation of DSF synthesis, via direct interaction with the DSF synthase RpfF. Interaction prevents synthesis of DSF, which remains at a basal level. This activity does not involve the phosphorelay mechanism and is not dependent on RpfG. Is also member of the two-component regulatory system RpfG/RpfC, which is involved in the perception and response to DSF, which is essential for cell-cell signaling. At high cell density, the level of extracellular DSF increases and binding of DSF to the sensor region of RpfC causes autophosphorylation of RpfC, which results in the release of RpfF and the activation of RpfG via a four-step phosphorelay. Activation of RpfG leads to the positive regulation of biofilm dispersal and the production of virulence factors. This is Sensory/regulatory protein RpfC (rpfC) from Xanthomonas campestris pv. campestris (strain 8004).